Here is a 183-residue protein sequence, read N- to C-terminus: Protein AC4 (183 aa).

Belongs to the geminiviridae protein AC4/C4 family.

Pathogenicity determinant. May act as a suppressor of RNA-mediated gene silencing, also known as post-transcriptional gene silencing (PTGS), a mechanism of plant viral defense that limits the accumulation of viral RNAs. This African cassava mosaic virus (isolate West Kenyan 844) (ACMV) protein is Protein AC4.